We begin with the raw amino-acid sequence, 284 residues long: Tripartite motif-containing protein 12A (284 aa).

Residues C15–R59 form an RING-type zinc finger. The segment at Q91–I132 adopts a B box-type zinc-finger fold. C96, H99, C118, and H124 together coordinate Zn(2+). Residues A130–S234 are a coiled coil.

This sequence belongs to the TRIM/RBCC family. As to expression, expressed in embryonic CNS, liver, kidney, olfactory epithelium.

The protein resides in the cytoplasm. The chain is Tripartite motif-containing protein 12A (Trim12a) from Mus musculus (Mouse).